The following is a 317-amino-acid chain: Methionyl-tRNA formyltransferase (317 aa).

113–116 (SLLP) contributes to the (6S)-5,6,7,8-tetrahydrofolate binding site.

The protein belongs to the Fmt family.

It catalyses the reaction L-methionyl-tRNA(fMet) + (6R)-10-formyltetrahydrofolate = N-formyl-L-methionyl-tRNA(fMet) + (6S)-5,6,7,8-tetrahydrofolate + H(+). Its function is as follows. Attaches a formyl group to the free amino group of methionyl-tRNA(fMet). The formyl group appears to play a dual role in the initiator identity of N-formylmethionyl-tRNA by promoting its recognition by IF2 and preventing the misappropriation of this tRNA by the elongation apparatus. This Pseudomonas fluorescens (strain SBW25) protein is Methionyl-tRNA formyltransferase.